Here is a 253-residue protein sequence, read N- to C-terminus: 2-C-methyl-D-erythritol 4-phosphate cytidylyltransferase (253 aa).

The protein belongs to the IspD/TarI cytidylyltransferase family. IspD subfamily.

The catalysed reaction is 2-C-methyl-D-erythritol 4-phosphate + CTP + H(+) = 4-CDP-2-C-methyl-D-erythritol + diphosphate. It participates in isoprenoid biosynthesis; isopentenyl diphosphate biosynthesis via DXP pathway; isopentenyl diphosphate from 1-deoxy-D-xylulose 5-phosphate: step 2/6. Its function is as follows. Catalyzes the formation of 4-diphosphocytidyl-2-C-methyl-D-erythritol from CTP and 2-C-methyl-D-erythritol 4-phosphate (MEP). In Chlorobium chlorochromatii (strain CaD3), this protein is 2-C-methyl-D-erythritol 4-phosphate cytidylyltransferase.